We begin with the raw amino-acid sequence, 324 residues long: NADH-ubiquinone oxidoreductase chain 1 (324 aa).

Helical transmembrane passes span Leu-9–Val-29, Ile-75–Leu-95, Leu-106–Gly-126, Val-142–Leu-162, Pro-177–Ala-197, Leu-228–Phe-248, Glu-259–Val-279, and Leu-300–Ile-320.

The protein belongs to the complex I subunit 1 family.

It localises to the mitochondrion inner membrane. It carries out the reaction a ubiquinone + NADH + 5 H(+)(in) = a ubiquinol + NAD(+) + 4 H(+)(out). Functionally, core subunit of the mitochondrial membrane respiratory chain NADH dehydrogenase (Complex I) that is believed to belong to the minimal assembly required for catalysis. Complex I functions in the transfer of electrons from NADH to the respiratory chain. The immediate electron acceptor for the enzyme is believed to be ubiquinone. The polypeptide is NADH-ubiquinone oxidoreductase chain 1 (MT-ND1) (Struthio camelus (Common ostrich)).